Reading from the N-terminus, the 1257-residue chain is Bifunctional autolysin (1257 aa).

An N-terminal signal peptide occupies residues 1–29; it reads MAKKFNYKLPSMVALTLVGSAVTAHQVQA. Positions 99–137 are enriched in polar residues; sequence QVNGDTRATQSTTSNNAKPVTKSTNTTAPKTNNNVTSAG. Disordered stretches follow at residues 99 to 150, 173 to 217, and 417 to 441; these read QVNG…NSEN, AAPK…KYKP, and TQST…PSTG. 2 stretches are compositionally biased toward low complexity: residues 173 to 208 and 419 to 440; these read AAPK…AAAP and STTT…TPST. The segment at 197 to 776 is N-acetylmuramoyl-L-alanine amidase; sequence ASAQPRSAAA…AVAQPKTAVK (580 aa). 7 GW domains span residues 444–518, 520–594, 613–687, 689–763, 785–860, 862–937, and 944–1018; these read TVAA…YNTA, SPVN…DTAK, TVSS…YNNA, SPVN…VPAA, TTQT…VQNL, KEVK…APTA, and AAKD…KELI. Residues 777-1257 are endo-beta-N-acetylglucosaminidase; the sequence is AYAVTKPQTT…GKYFDIPQYK (481 aa).

It in the N-terminal section; belongs to the N-acetylmuramoyl-L-alanine amidase 2 family. In the C-terminal section; belongs to the glycosyl hydrolase 73 family. Oligomer; forms a ring structure at the cell surface which is important for efficient partitioning of daughter cells after cell division. Post-translationally, undergoes proteolytic processing to generate the two extracellular lytic enzymes, probably at the septal region on the cell surface.

The protein resides in the secreted. The catalysed reaction is Hydrolyzes the link between N-acetylmuramoyl residues and L-amino acid residues in certain cell-wall glycopeptides.. It carries out the reaction an N(4)-(oligosaccharide-(1-&gt;3)-[oligosaccharide-(1-&gt;6)]-beta-D-Man-(1-&gt;4)-beta-D-GlcNAc-(1-&gt;4)-alpha-D-GlcNAc)-L-asparaginyl-[protein] + H2O = an oligosaccharide-(1-&gt;3)-[oligosaccharide-(1-&gt;6)]-beta-D-Man-(1-&gt;4)-D-GlcNAc + N(4)-(N-acetyl-beta-D-glucosaminyl)-L-asparaginyl-[protein]. Endohydrolysis of the di-N-acetylchitobiosyl unit in high-mannose glycopeptides and glycoproteins containing the -[(Man)5(GlcNAc)2]-Asn structure. One N-acetyl-D-glucosamine residue remains attached to the protein; the rest of the oligosaccharide is released intact. Cleaves the peptidoglycan connecting the daughter cells at the end of the cell division cycle, resulting in the separation of the two newly divided cells. Acts as an autolysin in penicillin-induced lysis. The chain is Bifunctional autolysin (atl) from Staphylococcus aureus (strain MRSA252).